The sequence spans 178 residues: MGITHELDIFVTNEDLALKNVELFKGNSYGCFINLKVKEEKKFNIIFVLKPDWSEVDKVKPIRMIVNNNSVDVEKVSESLYQVVYSASFSINSDSYVKVFSDNPDKYKHMYPTVTINVPKKKFKVVDQGNTYMFIQSPIDDCDKEQFLKNEFEYYDEENDFDDYEEYVKNRNDSFDDY.

It belongs to the poxviridae C7 protein family.

Plays a role for multiplication of the virus in different cell types. The sequence is that of Probable host range protein 2 from Yaba-like disease virus (YLDV).